An 85-amino-acid polypeptide reads, in one-letter code: Antitoxin VapB31 (85 aa).

Its function is as follows. Antitoxin component of a type II toxin-antitoxin (TA) system. Upon expression in M.smegmatis neutralizes the effect of cognate toxin VapC31. In Mycobacterium tuberculosis (strain ATCC 25618 / H37Rv), this protein is Antitoxin VapB31 (vapB31).